Consider the following 126-residue polypeptide: Large ribosomal subunit protein bL12 (126 aa).

Belongs to the bacterial ribosomal protein bL12 family. As to quaternary structure, homodimer. Part of the ribosomal stalk of the 50S ribosomal subunit. Forms a multimeric L10(L12)X complex, where L10 forms an elongated spine to which 2 to 4 L12 dimers bind in a sequential fashion. Binds GTP-bound translation factors.

In terms of biological role, forms part of the ribosomal stalk which helps the ribosome interact with GTP-bound translation factors. Is thus essential for accurate translation. In Desulforudis audaxviator (strain MP104C), this protein is Large ribosomal subunit protein bL12.